A 1050-amino-acid polypeptide reads, in one-letter code: TSC22 domain family protein 1 (1050 aa).

Residues methionine 1 to leucine 99 are required for interaction with TGFBR1 and promotion of TGF-beta signaling. 8 disordered regions span residues methionine 22–glycine 111, isoleucine 126–alanine 285, glutamine 445–serine 479, aspartate 511–glutamine 531, leucine 581–tyrosine 609, valine 720–serine 740, glutamine 795–valine 847, and serine 879–glycine 919. The span at alanine 38–serine 55 shows a compositional bias: low complexity. Pro residues predominate over residues phenylalanine 58–alanine 71. Low complexity predominate over residues serine 85 to glutamine 97. A compositionally biased stretch (acidic residues) spans glutamate 134 to aspartate 143. Over residues histidine 217–serine 241 the composition is skewed to basic residues. Serine 265 carries the phosphoserine modification. Positions threonine 458–serine 476 are enriched in low complexity. Residues leucine 586–proline 603 show a composition bias toward pro residues. Low complexity predominate over residues leucine 906–glycine 919. Residues leucine 983 to leucine 1004 are leucine-zipper. The tract at residues glutamine 1015–alanine 1050 is disordered. Positions glutamine 1021–alanine 1050 are enriched in low complexity.

This sequence belongs to the TSC-22/Dip/Bun family. In terms of assembly, forms homodimers. Forms heterodimers. Component of a complex composed of TSC22D1 (via N-terminus), TGFBR1 and TGFBR2; the interaction between TSC22D1 and TGFBR1 is inhibited by SMAD7 and promoted by TGFB1. Interacts with SMAD7; the interaction requires TGF-beta and the interaction is inhibited by TGFBR1. Interacts with TPT1/fortilin; interaction results in the destabilization of TSC22D1 protein and prevents TSC22D1-mediated apoptosis. Interacts with SMAD4 (via N-terminus). Interacts with ACVRL1/ALK1, ACVR1/ALK2, BMPR1A/ALK3, ACVR1B/ALK4, BMPR1B/ALK6, ACVR2A/ACTRII, and BMPR2. Interacts with SMAD6. Interacts with TFE3; the interaction is enhanced in the presence of TGF-beta. As to quaternary structure, forms a heterodimer with TSC22D4/THG1. Forms a heterodimer with TSC22D4/THG1. Interacts with histone H1-2. Interacts with GNL3. Ubiquitously expressed, abundantly expressed in testis, ovary, uterus, and lung. Expressed in cardiomyocytes.

Its subcellular location is the cytoplasm. It is found in the nucleus. The protein localises to the cell membrane. It localises to the mitochondrion. Functionally, transcriptional repressor. Acts on the C-type natriuretic peptide (CNP) promoter. Acts to promote CASP3-mediated apoptosis. Positively regulates TGF-beta signaling by interacting with SMAD7 which inhibits binding of SMAD7 to TGFBR1, preventing recruitment of SMURF ubiquitin ligases to TGFBR1 and inhibiting SMURF-mediated ubiquitination and degradation of TGFBR1. Contributes to enhancement of TGF-beta signaling by binding to and modulating the transcription activator activity of SMAD4. Promotes TGF-beta-induced transcription of COL1A2; via its interaction with TFE3 at E-boxes in the gene proximal promoter. Plays a role in the repression of hematopoietic precursor cell growth. Promotes IL2 deprivation-induced apoptosis in T-lymphocytes, via repression of TSC22D3/GILZ transcription and activation of the caspase cascade. In terms of biological role, may act to negatively regulate TGFB3 signaling and thereby inhibit cell death in mammary gland cells. Positively regulates cell death in response to TGFB3 during mammary gland involution. The chain is TSC22 domain family protein 1 from Rattus norvegicus (Rat).